The primary structure comprises 315 residues: Ribosomal protein L11 methyltransferase (315 aa).

S-adenosyl-L-methionine-binding residues include threonine 162, glycine 183, aspartate 205, and asparagine 248.

Belongs to the methyltransferase superfamily. PrmA family.

Its subcellular location is the cytoplasm. The catalysed reaction is L-lysyl-[protein] + 3 S-adenosyl-L-methionine = N(6),N(6),N(6)-trimethyl-L-lysyl-[protein] + 3 S-adenosyl-L-homocysteine + 3 H(+). Functionally, methylates ribosomal protein L11. This chain is Ribosomal protein L11 methyltransferase, found in Oceanobacillus iheyensis (strain DSM 14371 / CIP 107618 / JCM 11309 / KCTC 3954 / HTE831).